We begin with the raw amino-acid sequence, 130 residues long: Type VII secretion system extracellular protein C (130 aa).

This sequence belongs to the EsxC family. Forms both homodimers and heterodimers with EsxA. Homodimerization is calcium-dependent.

The protein resides in the secreted. The protein is Type VII secretion system extracellular protein C of Staphylococcus aureus (strain USA300).